We begin with the raw amino-acid sequence, 132 residues long: Small ribosomal subunit protein uS8 (132 aa).

Belongs to the universal ribosomal protein uS8 family. Part of the 30S ribosomal subunit. Contacts proteins S5 and S12.

Functionally, one of the primary rRNA binding proteins, it binds directly to 16S rRNA central domain where it helps coordinate assembly of the platform of the 30S subunit. The chain is Small ribosomal subunit protein uS8 from Halothermothrix orenii (strain H 168 / OCM 544 / DSM 9562).